Here is a 938-residue protein sequence, read N- to C-terminus: Bifunctional uridylyltransferase/uridylyl-removing enzyme (938 aa).

The interval Met1–Leu379 is uridylyltransferase. The uridylyl-removing stretch occupies residues Asp380–Ala733. Residues Val495–Leu617 form the HD domain. ACT domains are found at residues Glu734–Arg813 and Val845–Ala924.

It belongs to the GlnD family. Mg(2+) is required as a cofactor.

It carries out the reaction [protein-PII]-L-tyrosine + UTP = [protein-PII]-uridylyl-L-tyrosine + diphosphate. It catalyses the reaction [protein-PII]-uridylyl-L-tyrosine + H2O = [protein-PII]-L-tyrosine + UMP + H(+). Uridylyltransferase (UTase) activity is inhibited by glutamine, while glutamine activates uridylyl-removing (UR) activity. Modifies, by uridylylation and deuridylylation, the PII regulatory proteins (GlnB and homologs), in response to the nitrogen status of the cell that GlnD senses through the glutamine level. Under low glutamine levels, catalyzes the conversion of the PII proteins and UTP to PII-UMP and PPi, while under higher glutamine levels, GlnD hydrolyzes PII-UMP to PII and UMP (deuridylylation). Thus, controls uridylylation state and activity of the PII proteins, and plays an important role in the regulation of nitrogen assimilation and metabolism. This chain is Bifunctional uridylyltransferase/uridylyl-removing enzyme, found in Phenylobacterium zucineum (strain HLK1).